The sequence spans 696 residues: Probable glutamine--fructose-6-phosphate aminotransferase [isomerizing] (696 aa).

Residue Cys2 is the For GATase activity of the active site. Residues 2–303 (CGIFGYINYL…DDDIAHVRDG (302 aa)) enclose the Glutamine amidotransferase type-2 domain. SIS domains follow at residues 375–514 (YYDI…DSVS) and 547–686 (AIEQ…VDQP).

It catalyses the reaction D-fructose 6-phosphate + L-glutamine = D-glucosamine 6-phosphate + L-glutamate. Its pathway is nucleotide-sugar biosynthesis; UDP-N-acetyl-alpha-D-glucosamine biosynthesis; alpha-D-glucosamine 6-phosphate from D-fructose 6-phosphate: step 1/1. In terms of biological role, involved in amino sugar synthesis (formation of chitin, supplies the amino sugars of asparagine-linked oligosaccharides of glycoproteins). The chain is Probable glutamine--fructose-6-phosphate aminotransferase [isomerizing] from Schizosaccharomyces pombe (strain 972 / ATCC 24843) (Fission yeast).